The sequence spans 452 residues: MERRIFGIETEYGVTCTFRGQRRLSPDEVARYLFRRVVSWGRSSNVFLRNGSRLYLDVGSHPEYATAECDDLSELVVHDKAGERILEGLLVDAEQRLAEEGVTGDIYLFKNNTDSAGNSYGCHENYLVGRHGEFSRLADVLIPFLVSRQIVVGAGKVLQTPRGAIYCISQRAEHIWEGVSSATTRSRPIINTRDEPHADAERYRRLHVIVGDSNMNETTTLLKVAVTDLVLRMIEAGVPIRDMTLENPIRAIREISHDMTGRRKVRLANGKEMSALEIQSEYHSRAAEFVDREGFGPVHRQMLELWGRVLKAVDTGDLSLIDREIDWATKYQLIERYRAKRDLPMSSPRIAQMDLAYHDISRTRGLYYLLERNNQVDRVAHEPRVFEAKNVPPQTTRARLRGEFIRRAQEKRRDFTVDWVHLKLNDQAQRTVLCKDPFKAVDERVDKLIASM.

Residue E9 coordinates Mg(2+). Position 53 (R53) interacts with ATP. Residue Y55 coordinates Mg(2+). D57 functions as the Proton acceptor in the catalytic mechanism. E63 serves as a coordination point for Mg(2+). The ATP site is built by T66 and W419.

It belongs to the Pup ligase/Pup deamidase family. Pup-conjugating enzyme subfamily.

It catalyses the reaction ATP + [prokaryotic ubiquitin-like protein]-L-glutamate + [protein]-L-lysine = ADP + phosphate + N(6)-([prokaryotic ubiquitin-like protein]-gamma-L-glutamyl)-[protein]-L-lysine.. The protein operates within protein degradation; proteasomal Pup-dependent pathway. It participates in protein modification; protein pupylation. Catalyzes the covalent attachment of the prokaryotic ubiquitin-like protein modifier Pup to the proteasomal substrate proteins, thereby targeting them for proteasomal degradation. This tagging system is termed pupylation. The ligation reaction involves the side-chain carboxylate of the C-terminal glutamate of Pup and the side-chain amino group of a substrate lysine. The protein is Pup--protein ligase of Geodermatophilus obscurus (strain ATCC 25078 / DSM 43160 / JCM 3152 / CCUG 61914 / KCC A-0152 / KCTC 9177 / NBRC 13315 / NRRL B-3577 / G-20).